Here is a 476-residue protein sequence, read N- to C-terminus: Siroheme synthase (476 aa).

A precorrin-2 dehydrogenase /sirohydrochlorin ferrochelatase region spans residues 1 to 203 (MNYFPVFADL…RQIEAAKKEL (203 aa)). Residues 22–23 (TI) and 43–44 (QK) each bind NAD(+). At Ser128 the chain carries Phosphoserine. Positions 214–476 (GSVSLVGAGP…LDSLRIERVA (263 aa)) are uroporphyrinogen-III C-methyltransferase. An S-adenosyl-L-methionine-binding site is contributed by Pro223. Asp246 acts as the Proton acceptor in catalysis. Lys268 serves as the catalytic Proton donor. S-adenosyl-L-methionine is bound by residues 299-301 (GGD), Val304, 329-330 (TA), Met381, and Gly410.

In the N-terminal section; belongs to the precorrin-2 dehydrogenase / sirohydrochlorin ferrochelatase family. It in the C-terminal section; belongs to the precorrin methyltransferase family.

It catalyses the reaction uroporphyrinogen III + 2 S-adenosyl-L-methionine = precorrin-2 + 2 S-adenosyl-L-homocysteine + H(+). The catalysed reaction is precorrin-2 + NAD(+) = sirohydrochlorin + NADH + 2 H(+). It carries out the reaction siroheme + 2 H(+) = sirohydrochlorin + Fe(2+). The protein operates within cofactor biosynthesis; adenosylcobalamin biosynthesis; precorrin-2 from uroporphyrinogen III: step 1/1. It participates in cofactor biosynthesis; adenosylcobalamin biosynthesis; sirohydrochlorin from precorrin-2: step 1/1. Its pathway is porphyrin-containing compound metabolism; siroheme biosynthesis; precorrin-2 from uroporphyrinogen III: step 1/1. It functions in the pathway porphyrin-containing compound metabolism; siroheme biosynthesis; siroheme from sirohydrochlorin: step 1/1. The protein operates within porphyrin-containing compound metabolism; siroheme biosynthesis; sirohydrochlorin from precorrin-2: step 1/1. Its function is as follows. Multifunctional enzyme that catalyzes the SAM-dependent methylations of uroporphyrinogen III at position C-2 and C-7 to form precorrin-2 via precorrin-1. Then it catalyzes the NAD-dependent ring dehydrogenation of precorrin-2 to yield sirohydrochlorin. Finally, it catalyzes the ferrochelation of sirohydrochlorin to yield siroheme. This is Siroheme synthase from Mannheimia succiniciproducens (strain KCTC 0769BP / MBEL55E).